The following is a 232-amino-acid chain: Putative N-acetylmannosamine-6-phosphate 2-epimerase (232 aa).

Belongs to the NanE family.

It carries out the reaction an N-acyl-D-glucosamine 6-phosphate = an N-acyl-D-mannosamine 6-phosphate. Its pathway is amino-sugar metabolism; N-acetylneuraminate degradation; D-fructose 6-phosphate from N-acetylneuraminate: step 3/5. Its function is as follows. Converts N-acetylmannosamine-6-phosphate (ManNAc-6-P) to N-acetylglucosamine-6-phosphate (GlcNAc-6-P). The chain is Putative N-acetylmannosamine-6-phosphate 2-epimerase from Corynebacterium glutamicum (strain R).